The chain runs to 451 residues: DNA-directed RNA polymerase subunit Rpo1C (451 aa).

Positions 1–68 (MQDIIGKIED…DDDELLDAVE (68 aa)) are unknown. Positions 69–451 (DDYQRILKVQ…SVSVVMKERK (383 aa)) are DNA-directed RNA polymerase subunit Rpo1C.

This sequence belongs to the RNA polymerase beta' chain family. Part of the RNA polymerase complex.

It localises to the cytoplasm. The enzyme catalyses RNA(n) + a ribonucleoside 5'-triphosphate = RNA(n+1) + diphosphate. DNA-dependent RNA polymerase (RNAP) catalyzes the transcription of DNA into RNA using the four ribonucleoside triphosphates as substrates. Forms part of the jaw domain. In Methanothermobacter thermautotrophicus (strain ATCC 29096 / DSM 1053 / JCM 10044 / NBRC 100330 / Delta H) (Methanobacterium thermoautotrophicum), this protein is DNA-directed RNA polymerase subunit Rpo1C.